The sequence spans 468 residues: MVGFSRCALSQLRQPKAQLVRSFSHIPSRAYSAPSSSIPAAKKKYIPTSGTYPLGFQVSGTIVGVKPSNTTKPDLALLTSEVPCAAAAVFTKNKFQAAPVTFSRALLQKKGNKGIQGVVINSGCANAVTGKGGLEDAAKMAQAADKCLGQSDSIIVMSTGVIGQRLPIDKIINNVPKAHSALGGSHEHWLTMAKAICTTDTFPKLISRTFTLPSSPGVEYRIAGTTKGAGMIHPNMATLLGVIATDAPISSSALPSVLKHAVDRSFNSITIDGDTSTNDTVALLANGMAGGKEVVEGTPDYEAFREVLTKFSTELAQLIVRDGEGATKFVTIKVVDSASEEAARKIASTIARSPLVKTALYGKDANWGRILCATGYSLISEPSEPINDVPEIVPENTNVSFVPTDGTAELKLLVNGEPEQVDEARAAEILELEDLEILVRLGTGDKQATYWTCDYSHEYITINGDYRT.

The N-terminal 23 residues, 1 to 23, are a transit peptide targeting the mitochondrion; that stretch reads MVGFSRCALSQLRQPKAQLVRSF. Substrate-binding residues include Thr198, Lys227, Thr238, Glu324, Asn463, and Thr468. The active-site Nucleophile is the Thr238.

It belongs to the ArgJ family. As to quaternary structure, heterodimer of an alpha and a beta chain. Post-translationally, the alpha and beta chains are autoproteolytically processed from a single precursor protein within the mitochondrion.

It is found in the mitochondrion matrix. The enzyme catalyses N(2)-acetyl-L-ornithine + L-glutamate = N-acetyl-L-glutamate + L-ornithine. It catalyses the reaction L-glutamate + acetyl-CoA = N-acetyl-L-glutamate + CoA + H(+). Its pathway is amino-acid biosynthesis; L-arginine biosynthesis; L-ornithine and N-acetyl-L-glutamate from L-glutamate and N(2)-acetyl-L-ornithine (cyclic): step 1/1. It functions in the pathway amino-acid biosynthesis; L-arginine biosynthesis; N(2)-acetyl-L-ornithine from L-glutamate: step 1/4. Its function is as follows. Catalyzes two activities which are involved in the cyclic version of arginine biosynthesis: the synthesis of acetylglutamate from glutamate and acetyl-CoA, and of ornithine by transacetylation between acetylornithine and glutamate. This is Arginine biosynthesis bifunctional protein ArgJ, mitochondrial from Podospora anserina (strain S / ATCC MYA-4624 / DSM 980 / FGSC 10383) (Pleurage anserina).